Reading from the N-terminus, the 664-residue chain is Chaperone protein DnaK (664 aa).

Threonine 201 is modified (phosphothreonine; by autocatalysis). Positions 574–592 (LKEDASTEKIKEASEELSR) are enriched in basic and acidic residues. Residues 574-664 (LKEDASTEKI…DVEIVDKPND (91 aa)) are disordered. The segment covering 600-617 (AMQSQSASAAPSSAANAQ) has biased composition (low complexity). The span at 639-649 (GNSTSASSNNE) shows a compositional bias: polar residues.

Belongs to the heat shock protein 70 family.

Acts as a chaperone. The protein is Chaperone protein DnaK of Chlamydia felis (strain Fe/C-56) (Chlamydophila felis).